The following is a 130-amino-acid chain: Small ribosomal subunit protein uS9 (130 aa).

The protein belongs to the universal ribosomal protein uS9 family.

The chain is Small ribosomal subunit protein uS9 from Verminephrobacter eiseniae (strain EF01-2).